The following is a 147-amino-acid chain: Methylglyoxal synthase (147 aa).

Residues 1–147 enclose the MGS-like domain; it reads MKGQRNIGMV…TPYVKRLGAK (147 aa). Substrate-binding positions include His-12, Lys-16, 38–41, and 59–60; these read TGTT and SG. Residue Asp-65 is the Proton donor/acceptor of the active site. His-92 contributes to the substrate binding site.

This sequence belongs to the methylglyoxal synthase family.

The catalysed reaction is dihydroxyacetone phosphate = methylglyoxal + phosphate. Its function is as follows. Catalyzes the formation of methylglyoxal from dihydroxyacetone phosphate. This Oleidesulfovibrio alaskensis (strain ATCC BAA-1058 / DSM 17464 / G20) (Desulfovibrio alaskensis) protein is Methylglyoxal synthase.